The chain runs to 226 residues: Gap junction beta-2 protein (226 aa).

The Cytoplasmic segment spans residues 1–20 (MDWGGLHTILGGVNKHSTSI). Residues 21–40 (GKIWLTVLFIFRIMILVVAA) form a helical membrane-spanning segment. At 41–75 (KEVWGDEQADFVCNTLQPGCKNVCYDHYFPISHIR) the chain is on the extracellular side. Disulfide bonds link Cys-53/Cys-180, Cys-60/Cys-174, and Cys-64/Cys-169. A helical membrane pass occupies residues 76–98 (LWALQLIFVSTPALLVAMHVAYY). Residues 99–131 (RHEKKRKFIRGEIKTEFKDIEEIKKQKVRIEGS) lie on the Cytoplasmic side of the membrane. The chain crosses the membrane as a helical span at residues 132-154 (LWWTYTGSIFFRVIFEAAFMYVF). At 155 to 192 (YVMYDGFAMQRLVKCNAWPCPNTVDCFVSRPTEKTVFT) the chain is on the extracellular side. Residues 193-215 (VFMIAVSGICILLNVTELCYLLI) form a helical membrane-spanning segment. The Cytoplasmic portion of the chain corresponds to 216–226 (RFCSGKSKKPV).

The protein belongs to the connexin family. In terms of assembly, a connexon is composed of a hexamer of connexins. Interacts with CNST.

It is found in the cell membrane. The protein localises to the cell junction. Its subcellular location is the gap junction. Its function is as follows. One gap junction consists of a cluster of closely packed pairs of transmembrane channels, the connexons, through which materials of low MW diffuse from one cell to a neighboring cell. The protein is Gap junction beta-2 protein (GJB2) of Bos taurus (Bovine).